A 72-amino-acid chain; its full sequence is UPF0270 protein YheU (72 aa).

This sequence belongs to the UPF0270 family.

This chain is UPF0270 protein YheU, found in Escherichia coli (strain UTI89 / UPEC).